The chain runs to 345 residues: Delta(1)-pyrroline-2-carboxylate reductase (345 aa).

The Charge relay system role is filled by Ser-47. The Proton donor role is filled by His-48. Arg-52 contacts substrate. Residue 121 to 125 (HFSAL) participates in NADP(+) binding. A substrate-binding site is contributed by Thr-161. 179-181 (DFA) is an NADP(+) binding site. Residue 187 to 188 (RG) coordinates substrate. Glu-189 (charge relay system) is an active-site residue. NADP(+) is bound by residues 230–231 (HK) and 305–311 (RLPSGRR).

This sequence belongs to the LDH2/MDH2 oxidoreductase family. In terms of assembly, homodimer.

The enzyme catalyses L-proline + NAD(+) = 1-pyrroline-2-carboxylate + NADH + H(+). It catalyses the reaction L-proline + NADP(+) = 1-pyrroline-2-carboxylate + NADPH + H(+). Catalyzes the reduction of Delta(1)-pyrroline-2-carboxylate (Pyr2C) to L-proline, using NADPH as the electron donor. Is likely involved in a degradation pathway that converts trans-3-hydroxy-L-proline (t3LHyp) to L-proline, which would allow A.tumefaciens to grow on t3LHyp as a sole carbon source. This is Delta(1)-pyrroline-2-carboxylate reductase from Agrobacterium fabrum (strain C58 / ATCC 33970) (Agrobacterium tumefaciens (strain C58)).